Consider the following 161-residue polypeptide: Putative pre-16S rRNA nuclease (161 aa).

Belongs to the YqgF nuclease family.

The protein resides in the cytoplasm. Functionally, could be a nuclease involved in processing of the 5'-end of pre-16S rRNA. In Rhodospirillum rubrum (strain ATCC 11170 / ATH 1.1.1 / DSM 467 / LMG 4362 / NCIMB 8255 / S1), this protein is Putative pre-16S rRNA nuclease.